A 210-amino-acid polypeptide reads, in one-letter code: ER membrane protein complex subunit 8 (210 aa).

The region spanning valine 4 to arginine 150 is the MPN domain.

Belongs to the EMC8/EMC9 family. Component of the ER membrane protein complex (EMC). EMC8 and EMC9 are mutually exclusive subunits of the EMC complex. Expressed in liver, pancreas, heart, lung, kidney, brain, skeletal muscle, and placenta. Expression levels are highest in pancreas and moderate in heart, skeletal muscle, and placenta.

It is found in the endoplasmic reticulum membrane. Functionally, part of the endoplasmic reticulum membrane protein complex (EMC) that enables the energy-independent insertion into endoplasmic reticulum membranes of newly synthesized membrane proteins. Preferentially accommodates proteins with transmembrane domains that are weakly hydrophobic or contain destabilizing features such as charged and aromatic residues. Involved in the cotranslational insertion of multi-pass membrane proteins in which stop-transfer membrane-anchor sequences become ER membrane spanning helices. It is also required for the post-translational insertion of tail-anchored/TA proteins in endoplasmic reticulum membranes. By mediating the proper cotranslational insertion of N-terminal transmembrane domains in an N-exo topology, with translocated N-terminus in the lumen of the ER, controls the topology of multi-pass membrane proteins like the G protein-coupled receptors. By regulating the insertion of various proteins in membranes, it is indirectly involved in many cellular processes. This is ER membrane protein complex subunit 8 (EMC8) from Homo sapiens (Human).